A 165-amino-acid polypeptide reads, in one-letter code: uncharacterized protein (165 aa).

Helical transmembrane passes span 6 to 26, 28 to 48, 54 to 74, 78 to 98, 110 to 130, and 138 to 158; these read ILFP…SGQA, LFSG…AFVY, AVTP…HFFA, WVWW…SLLV, AVSM…MAWL, and ALLK…LLLI.

It localises to the cell membrane. This is an uncharacterized protein from Bacillus subtilis (strain 168).